The following is a 300-amino-acid chain: Bidirectional sugar transporter SWEET12 (300 aa).

Over Met1 to Ala4 the chain is Extracellular. The chain crosses the membrane as a helical span at residues Leu5–Val25. One can recognise a MtN3/slv 1 domain in the interval Ala8–Gln92. Topologically, residues Pro26–Glu38 are cytoplasmic. The chain crosses the membrane as a helical span at residues Ser39–Leu61. Residues Thr62 to Leu67 are Extracellular-facing. The helical transmembrane segment at Leu68–Tyr88 threads the bilayer. Topologically, residues Ala89 to Lys99 are cytoplasmic. Residues Leu100–Val120 form a helical membrane-spanning segment. At Lys121–Thr128 the chain is on the extracellular side. Residues Leu129–Ile149 traverse the membrane as a helical segment. Positions Gly131 to Lys213 constitute a MtN3/slv 2 domain. Over Arg150 to Pro162 the chain is Cytoplasmic. A helical transmembrane segment spans residues Phe163–Met183. Residues Lys184–Asp185 are Extracellular-facing. The chain crosses the membrane as a helical span at residues Phe186–Tyr206. At Val207 to Ala300 the chain is on the cytoplasmic side. Positions Ala256–Ala300 are disordered. Residues Pro269–Val280 show a composition bias toward basic and acidic residues. Pro residues predominate over residues Ile284 to Leu294.

This sequence belongs to the SWEET sugar transporter family. Forms homooligomers and/or heterooligomers.

The protein resides in the cell membrane. Its function is as follows. Mediates both low-affinity uptake and efflux of sugar across the plasma membrane. Functionally, confers blight susceptibility. Confers TAL effector-mediated susceptibility to Xanthomonas oryzae pv. oryzae. This chain is Bidirectional sugar transporter SWEET12 (SWEET12), found in Oryza sativa subsp. japonica (Rice).